The chain runs to 532 residues: Phosphoenolpyruvate carboxykinase (ATP) (532 aa).

Positions 60, 200, and 206 each coordinate substrate. Residues Lys-206, His-225, and Gly-242–Thr-250 each bind ATP. 2 residues coordinate Mn(2+): Lys-206 and His-225. Ser-244 is a binding site for substrate. Mn(2+) is bound at residue Asp-263. ATP is bound by residues Glu-291, Arg-327, Arg-443–Ile-444, and Thr-449. Position 327 (Arg-327) interacts with substrate.

The protein belongs to the phosphoenolpyruvate carboxykinase (ATP) family. In terms of assembly, monomer. The cofactor is Mn(2+).

It is found in the cytoplasm. The enzyme catalyses oxaloacetate + ATP = phosphoenolpyruvate + ADP + CO2. It participates in carbohydrate biosynthesis; gluconeogenesis. With respect to regulation, inhibited by p-chloromercuribenzoate. Its function is as follows. Involved in gluconeogenesis. Catalyzes the conversion of oxaloacetate (OAA) to phosphoenolpyruvate (PEP) through direct phosphoryl transfer between the nucleoside triphosphate and OAA. In Anaerobiospirillum succiniciproducens, this protein is Phosphoenolpyruvate carboxykinase (ATP).